A 208-amino-acid polypeptide reads, in one-letter code: Large ribosomal subunit protein uL4 (208 aa).

The disordered stretch occupies residues glutamine 46–isoleucine 84. Over residues glycine 69–serine 80 the composition is skewed to polar residues.

This sequence belongs to the universal ribosomal protein uL4 family. In terms of assembly, part of the 50S ribosomal subunit.

Functionally, one of the primary rRNA binding proteins, this protein initially binds near the 5'-end of the 23S rRNA. It is important during the early stages of 50S assembly. It makes multiple contacts with different domains of the 23S rRNA in the assembled 50S subunit and ribosome. Its function is as follows. Forms part of the polypeptide exit tunnel. The polypeptide is Large ribosomal subunit protein uL4 (Chlorobium limicola (strain DSM 245 / NBRC 103803 / 6330)).